A 394-amino-acid polypeptide reads, in one-letter code: Maltose permease (394 aa).

Residues 1–11 lie on the Cytoplasmic side of the membrane; that stretch reads MGAAFKWGAAA. A helical transmembrane segment spans residues 12 to 38; sequence RKTVFPLFYFLIFFAFGALFPLLSVYL. Residues 39-45 are Extracellular-facing; the sequence is QEEARLS. A helical membrane pass occupies residues 46-74; that stretch reads GAAIGWIMSLPPIVTMAAQPLWGTAADYT. Residues 75–78 lie on the Cytoplasmic side of the membrane; it reads RKPV. A helical transmembrane segment spans residues 79-104; it reads GLLLAALVLAALFGVMYALAGSYRLF. Residues 105-108 are Extracellular-facing; it reads VVLT. The chain crosses the membrane as a helical span at residues 109–126; it reads VLLSAMQSAIVPLSDSLA. The Cytoplasmic segment spans residues 127 to 137; that stretch reads LRHVHEQGGNY. Residues 138 to 160 traverse the membrane as a helical segment; that stretch reads GAIRLWGSLGFAMAVLAVGWLSD. The Extracellular segment spans residues 161–163; that stretch reads HIA. A helical transmembrane segment spans residues 164–183; sequence FAVIFYAFSLALLTAAALAT. The Cytoplasmic segment spans residues 184–213; it reads RLPRYPMGAPGALTRQDVRGLLASRPFRLL. Residues 214-233 form a helical membrane-spanning segment; it reads LVATFLLFGPILANNSYFGL. Residues 234–237 are Extracellular-facing; sequence LIHE. The helical transmembrane segment at 238 to 262 threads the bilayer; sequence LGGTLTGIGLAFLFAAGSEAPFMKA. Topologically, residues 263 to 272 are cytoplasmic; sequence ADRLIGRFGM. The helical transmembrane segment at 273–292 threads the bilayer; that stretch reads VRLLLLAALISAARWLAYAA. The Extracellular segment spans residues 293-295; sequence DPP. The chain crosses the membrane as a helical span at residues 296–318; it reads LWFVYMTTVVQGCSVGLAIPTAL. The Cytoplasmic portion of the chain corresponds to 319–330; sequence QYARRLAPERVQ. The chain crosses the membrane as a helical span at residues 331-358; that stretch reads STAVALYSAVGNGLGAWFCTLVGGYLLE. At 359 to 361 the chain is on the extracellular side; the sequence is RWQ. A helical membrane pass occupies residues 362 to 382; that stretch reads IGAVYLFFSICTIVGVLVLLL. The Cytoplasmic portion of the chain corresponds to 383–394; the sequence is LAKRERTAGEEK.

The protein belongs to the major facilitator superfamily.

The protein localises to the cell membrane. Functionally, high affinity transport of maltose. The sequence is that of Maltose permease (malA) from Geobacillus stearothermophilus (Bacillus stearothermophilus).